A 146-amino-acid chain; its full sequence is Ribosome-binding factor A (146 aa).

Residues 127–146 (EFAGEADPYKKPEDDEAAES) form a disordered region.

It belongs to the RbfA family. Monomer. Binds 30S ribosomal subunits, but not 50S ribosomal subunits or 70S ribosomes.

It is found in the cytoplasm. Functionally, one of several proteins that assist in the late maturation steps of the functional core of the 30S ribosomal subunit. Associates with free 30S ribosomal subunits (but not with 30S subunits that are part of 70S ribosomes or polysomes). Required for efficient processing of 16S rRNA. May interact with the 5'-terminal helix region of 16S rRNA. The sequence is that of Ribosome-binding factor A from Renibacterium salmoninarum (strain ATCC 33209 / DSM 20767 / JCM 11484 / NBRC 15589 / NCIMB 2235).